The chain runs to 299 residues: Lathosterol oxidase (299 aa).

The next 3 membrane-spanning stretches (helical) occupy residues 32-52, 79-99, and 117-137; these read VSLL…CATL, FTVK…LLEL, and IHLI…IYWI. Residues 124–252 form the Fatty acid hydroxylase domain; that stretch reads ISFLFFTDML…YFTLWDRIGG (129 aa). The Histidine box-1 signature appears at 138–143; that stretch reads HRGLHH. The Histidine box-2 signature appears at 151-155; sequence HKPHH. Residues 228-233 carry the Histidine box-3 motif; sequence HHTDHH. Phosphoserine is present on serine 253.

It belongs to the sterol desaturase family. The cofactor is Fe cation.

Its subcellular location is the endoplasmic reticulum membrane. It catalyses the reaction a Delta(7)-sterol + 2 Fe(II)-[cytochrome b5] + O2 + 2 H(+) = a Delta(5),Delta(7)-sterol + 2 Fe(III)-[cytochrome b5] + 2 H2O. The catalysed reaction is lathosterol + 2 Fe(II)-[cytochrome b5] + O2 + 2 H(+) = 7-dehydrocholesterol + 2 Fe(III)-[cytochrome b5] + 2 H2O. It carries out the reaction 5alpha-cholesta-7,24-dien-3beta-ol + 2 Fe(II)-[cytochrome b5] + O2 + 2 H(+) = 7-dehydrodesmosterol + 2 Fe(III)-[cytochrome b5] + 2 H2O. It functions in the pathway steroid biosynthesis; cholesterol biosynthesis. Functionally, catalyzes the penultimate step of the biosynthesis of cholesterol, the dehydrogenation of lathosterol into 7-dehydrocholesterol (7-DHC). Cholesterol is the major sterol component in mammalian membranes and a precursor for bile acid and steroid hormone synthesis. In addition to its essential role in cholesterol biosynthesis, it also indirectly regulates ferroptosis through the production of 7-DHC. By diverting the spread of damage caused by peroxyl radicals from the phospholipid components to its sterol nucleus, 7-DHC prevents this form of cell death. The protein is Lathosterol oxidase of Rattus norvegicus (Rat).